Reading from the N-terminus, the 486-residue chain is MSTNVADLLHTIKNNWCDRSILVVGDVMLDQYIWGDVGRISPEAPVPIVRATHRTEQPGGAANVALNIARLGARATIVGFTGTDDNERALKDYLSSNRVEADFVSCEGFPTITKLRILSGRQQMLRLDNERAESRPSTAYQKLIERALHHLPQSDALILSDYAKGVLLPEVCQTLIQAAAQRKIPVLVDPKNVDFSRYRGATTISPNLGELALAARVDLENLNDLLYAAQQMVRNLGLSFLTATLGEKGIALVTRDKTTISAAVARQVFDVSGAGDAVIATLSLSLASGLDPELGVHLANLAGAIVVSKVGTAPVEQYELLNALTAESVPVAQAKVVTRSELLELVARWRRNDERIVVTNGCFDLLHVGHISLLEQARGFGDRLVVAINSDRSVRELKGNSRPIVGEQERARVLAAIAAVDAVVIFDERTPLELIEATRPDVLVKGGDYAVSGVVGAEEVQSWGGHVKIVPIVEGFSTTKLIEKGH.

Residues 1–331 (MSTNVADLLH…NALTAESVPV (331 aa)) form a ribokinase region. An ATP-binding site is contributed by 207 to 210 (NLGE). Aspartate 276 is an active-site residue. Residues 358 to 486 (VTNGCFDLLH…STTKLIEKGH (129 aa)) form a cytidylyltransferase region.

It in the N-terminal section; belongs to the carbohydrate kinase PfkB family. The protein in the C-terminal section; belongs to the cytidylyltransferase family. As to quaternary structure, homodimer.

It carries out the reaction D-glycero-beta-D-manno-heptose 7-phosphate + ATP = D-glycero-beta-D-manno-heptose 1,7-bisphosphate + ADP + H(+). The catalysed reaction is D-glycero-beta-D-manno-heptose 1-phosphate + ATP + H(+) = ADP-D-glycero-beta-D-manno-heptose + diphosphate. The protein operates within nucleotide-sugar biosynthesis; ADP-L-glycero-beta-D-manno-heptose biosynthesis; ADP-L-glycero-beta-D-manno-heptose from D-glycero-beta-D-manno-heptose 7-phosphate: step 1/4. Its pathway is nucleotide-sugar biosynthesis; ADP-L-glycero-beta-D-manno-heptose biosynthesis; ADP-L-glycero-beta-D-manno-heptose from D-glycero-beta-D-manno-heptose 7-phosphate: step 3/4. Functionally, catalyzes the phosphorylation of D-glycero-D-manno-heptose 7-phosphate at the C-1 position to selectively form D-glycero-beta-D-manno-heptose-1,7-bisphosphate. In terms of biological role, catalyzes the ADP transfer from ATP to D-glycero-beta-D-manno-heptose 1-phosphate, yielding ADP-D-glycero-beta-D-manno-heptose. This chain is Bifunctional protein HldE, found in Koribacter versatilis (strain Ellin345).